The primary structure comprises 244 residues: AA9 family lytic polysaccharide monooxygenase B (244 aa).

The first 19 residues, 1–19 (MFLVPLLAALSLSAPKVAA), serve as a signal peptide directing secretion. His20 is a Cu(2+) binding site. Tyr39 contributes to the (1,4-beta-D-glucosyl)n binding site. Intrachain disulfides connect Cys68–Cys189 and Cys111–Cys115. His99 is a Cu(2+) binding site. N-linked (GlcNAc...) asparagine glycosylation is present at Asn152. Residues His178 and Gln184 each coordinate O2. Tyr186 contributes to the Cu(2+) binding site. Positions 224, 226, and 229 each coordinate (1,4-beta-D-glucosyl)n. N-linked (GlcNAc...) asparagine glycosylation is present at Asn233.

It belongs to the polysaccharide monooxygenase AA9 family. Cu(2+) is required as a cofactor.

It is found in the secreted. It carries out the reaction [(1-&gt;4)-beta-D-glucosyl]n+m + reduced acceptor + O2 = 4-dehydro-beta-D-glucosyl-[(1-&gt;4)-beta-D-glucosyl]n-1 + [(1-&gt;4)-beta-D-glucosyl]m + acceptor + H2O.. Its function is as follows. Lytic polysaccharide monooxygenase (LPMO) that depolymerizes crystalline and amorphous polysaccharides via the oxidation of scissile alpha- or beta-(1-4)-glycosidic bonds, yielding specifically C1 oxidation product. Catalysis by LPMOs requires the reduction of the active-site copper from Cu(II) to Cu(I) by a reducing agent and H(2)O(2) or O(2) as a cosubstrate. Displays catalytic activity on insoluble cellulose using I-beta microfibril model substrate. In Heterobasidion irregulare (strain TC 32-1), this protein is AA9 family lytic polysaccharide monooxygenase B.